The chain runs to 1400 residues: DNA-directed RNA polymerase subunit beta' (1400 aa).

Positions 71, 73, 86, and 89 each coordinate Zn(2+). The Mg(2+) site is built by Asp462, Asp464, and Asp466. Residues Cys811, Cys885, Cys892, and Cys895 each contribute to the Zn(2+) site.

It belongs to the RNA polymerase beta' chain family. In terms of assembly, the RNAP catalytic core consists of 2 alpha, 1 beta, 1 beta' and 1 omega subunit. When a sigma factor is associated with the core the holoenzyme is formed, which can initiate transcription. The cofactor is Mg(2+). Zn(2+) is required as a cofactor.

It catalyses the reaction RNA(n) + a ribonucleoside 5'-triphosphate = RNA(n+1) + diphosphate. Functionally, DNA-dependent RNA polymerase catalyzes the transcription of DNA into RNA using the four ribonucleoside triphosphates as substrates. The protein is DNA-directed RNA polymerase subunit beta' of Brucella abortus (strain S19).